The sequence spans 383 residues: Cell division protein FtsZ (383 aa).

GTP-binding positions include 20-24 (GGGGN), 107-109 (GTG), Glu-138, Arg-142, and Asn-186.

The protein belongs to the FtsZ family. Homodimer. Polymerizes to form a dynamic ring structure in a strictly GTP-dependent manner. Interacts directly with several other division proteins.

It is found in the cytoplasm. In terms of biological role, essential cell division protein that forms a contractile ring structure (Z ring) at the future cell division site. The regulation of the ring assembly controls the timing and the location of cell division. One of the functions of the FtsZ ring is to recruit other cell division proteins to the septum to produce a new cell wall between the dividing cells. Binds GTP and shows GTPase activity. This chain is Cell division protein FtsZ, found in Shigella flexneri.